The chain runs to 335 residues: Acetyl-coenzyme A carboxylase carboxyl transferase subunit alpha (335 aa).

A CoA carboxyltransferase C-terminal domain is found at 40-294 (QLETLATRRR…KGAIEKHLNE (255 aa)).

This sequence belongs to the AccA family. In terms of assembly, acetyl-CoA carboxylase is a heterohexamer composed of biotin carboxyl carrier protein (AccB), biotin carboxylase (AccC) and two subunits each of ACCase subunit alpha (AccA) and ACCase subunit beta (AccD).

It localises to the cytoplasm. The catalysed reaction is N(6)-carboxybiotinyl-L-lysyl-[protein] + acetyl-CoA = N(6)-biotinyl-L-lysyl-[protein] + malonyl-CoA. It functions in the pathway lipid metabolism; malonyl-CoA biosynthesis; malonyl-CoA from acetyl-CoA: step 1/1. Component of the acetyl coenzyme A carboxylase (ACC) complex. First, biotin carboxylase catalyzes the carboxylation of biotin on its carrier protein (BCCP) and then the CO(2) group is transferred by the carboxyltransferase to acetyl-CoA to form malonyl-CoA. The polypeptide is Acetyl-coenzyme A carboxylase carboxyl transferase subunit alpha (Prochlorococcus marinus subsp. pastoris (strain CCMP1986 / NIES-2087 / MED4)).